The following is a 462-amino-acid chain: 23S rRNA (uracil(1939)-C(5))-methyltransferase RlmD (462 aa).

One can recognise a TRAM domain in the interval 6-76 (KSRKPQQPEY…KRLEEAEMVE (71 aa)). Positions 90, 96, 99, and 178 each coordinate [4Fe-4S] cluster. Gln-287, Phe-316, Asn-321, Glu-340, Asp-367, and Asp-388 together coordinate S-adenosyl-L-methionine. The active-site Nucleophile is the Cys-414.

The protein belongs to the class I-like SAM-binding methyltransferase superfamily. RNA M5U methyltransferase family. RlmD subfamily.

The catalysed reaction is uridine(1939) in 23S rRNA + S-adenosyl-L-methionine = 5-methyluridine(1939) in 23S rRNA + S-adenosyl-L-homocysteine + H(+). In terms of biological role, catalyzes the formation of 5-methyl-uridine at position 1939 (m5U1939) in 23S rRNA. The sequence is that of 23S rRNA (uracil(1939)-C(5))-methyltransferase RlmD from Acinetobacter baumannii (strain AB0057).